Reading from the N-terminus, the 320-residue chain is Cytochrome f (320 aa).

Residues 1–35 (MQTRNTFSWIKEEITRSISVSLMIYIITGASISNA) form the signal peptide. Heme is bound by residues Y36, C56, C59, and H60. The chain crosses the membrane as a helical span at residues 286 to 306 (VQGLLFFLASIVFAQIFLVLK).

This sequence belongs to the cytochrome f family. In terms of assembly, the 4 large subunits of the cytochrome b6-f complex are cytochrome b6, subunit IV (17 kDa polypeptide, petD), cytochrome f and the Rieske protein, while the 4 small subunits are PetG, PetL, PetM and PetN. The complex functions as a dimer. Heme is required as a cofactor.

The protein localises to the plastid. It localises to the chloroplast thylakoid membrane. Component of the cytochrome b6-f complex, which mediates electron transfer between photosystem II (PSII) and photosystem I (PSI), cyclic electron flow around PSI, and state transitions. This Gossypium hirsutum (Upland cotton) protein is Cytochrome f.